Reading from the N-terminus, the 153-residue chain is Interleukin-4 (153 aa).

The N-terminal stretch at 1–24 (MGLTSQLLPPLFFLLACAGNFVHG) is a signal peptide. Disulfide bonds link Cys-27–Cys-151, Cys-48–Cys-89, and Cys-70–Cys-123. Residue Asn-62 is glycosylated (N-linked (GlcNAc...) asparagine).

The protein belongs to the IL-4/IL-13 family. Interacts with IL4R. Interacts with IL13RA1.

Its subcellular location is the secreted. In terms of biological role, cytokine secreted primarily by mast cells, T-cells, eosinophils, and basophils that plays a role in regulating antibody production, hematopoiesis and inflammation, and the development of effector T-cell responses. Induces the expression of class II MHC molecules on resting B-cells. Enhances both secretion and cell surface expression of IgE and IgG1. Also regulates the expression of the low affinity Fc receptor for IgE (CD23) on both lymphocytes and monocytes. Positively regulates IL31RA expression in macrophages. Stimulates autophagy in dendritic cells by interfering with mTORC1 signaling and through the induction of RUFY4. In addition, plays a critical role in higher functions of the normal brain, such as memory and learning. Upon binding to IL4, IL4R receptor dimerizes either with the common IL2R gamma chain/IL2RG to produce the type 1 signaling complex, located mainly on hematopoietic cells, or with the IL13RA1 to produce the type 2 complex, which is also expressed on nonhematopoietic cells. Engagement of both types of receptors initiates JAK3 and to a lower extend JAK1 phosphorylation leading to activation of the signal transducer and activator of transcription 6/STAT6. In Homo sapiens (Human), this protein is Interleukin-4 (IL4).